Consider the following 94-residue polypeptide: Progonadoliberin-1 (94 aa).

The N-terminal stretch at 1–22 (MAAKILALWLLLAGTVFPQGCC) is a signal peptide. The residue at position 23 (Gln23) is a Pyrrolidone carboxylic acid. Position 32 is a glycine amide (Gly32).

The protein belongs to the GnRH family. Synthesized in preoptic neurons and is transported to the pituitary in the preoptic-hypophyseal axons.

It localises to the secreted. Its function is as follows. Stimulates the secretion of gonadotropins. May be responsible for the regulation of the hypothalamic-pituitary-gonadal axis. In Haplochromis burtoni (Burton's mouthbrooder), this protein is Progonadoliberin-1 (gnrh1).